We begin with the raw amino-acid sequence, 20 residues long: Citrate synthase (20 aa).

This sequence belongs to the citrate synthase family. In terms of assembly, homodimer.

It carries out the reaction oxaloacetate + acetyl-CoA + H2O = citrate + CoA + H(+). It functions in the pathway carbohydrate metabolism; tricarboxylic acid cycle; isocitrate from oxaloacetate: step 1/2. The sequence is that of Citrate synthase from Populus euphratica (Euphrates poplar).